The chain runs to 279 residues: Undecaprenyl-diphosphatase (279 aa).

8 helical membrane-spanning segments follow: residues 2 to 22 (LIIE…TEWL), 44 to 64 (AFIE…VMLI), 85 to 105 (WQLW…AVPL), 113 to 133 (FYFM…FIWI), 163 to 183 (VLSI…AIIL), 188 to 208 (TVAA…YSGL), 223 to 243 (AQVL…LLAI), and 255 to 275 (FTIF…YSFF).

This sequence belongs to the UppP family.

Its subcellular location is the cell membrane. It catalyses the reaction di-trans,octa-cis-undecaprenyl diphosphate + H2O = di-trans,octa-cis-undecaprenyl phosphate + phosphate + H(+). Its function is as follows. Catalyzes the dephosphorylation of undecaprenyl diphosphate (UPP). Confers resistance to bacitracin. The sequence is that of Undecaprenyl-diphosphatase from Streptococcus pyogenes serotype M28 (strain MGAS6180).